The primary structure comprises 217 residues: Homeobox protein Hox-B7 (217 aa).

Residues 126–131 (IYPWMR) carry the Antp-type hexapeptide motif. The segment at residues 137–196 (RKRGRQTYTRYQTLELEKEFHYNRYLTRRRRIEIAHTLCLTERQIKIWFQNRRMKWKKEN) is a DNA-binding region (homeobox). The segment at 194–217 (KENKTAGPGTTGQDRAEAEEEEEE) is disordered.

This sequence belongs to the Antp homeobox family. As to quaternary structure, forms a DNA-binding heterodimer with transcription factor PBX1.

The protein localises to the nucleus. In terms of biological role, sequence-specific transcription factor which is part of a developmental regulatory system that provides cells with specific positional identities on the anterior-posterior axis. The chain is Homeobox protein Hox-B7 (HOXB7) from Homo sapiens (Human).